An 814-amino-acid polypeptide reads, in one-letter code: ATP-dependent 6-phosphofructokinase 1 (814 aa).

The interval 1-420 is N-terminal catalytic PFK domain 1; it reads MDADASTITP…NLETYKLLTK (420 aa). Residues Gly-55, 118-119, and 148-151 contribute to the ATP site; these read RS and GDGS. Residue Asp-149 participates in Mg(2+) binding. Substrate contacts are provided by residues 194 to 196, Arg-231, 238 to 240, Glu-294, Arg-322, and 328 to 331; these read SID, MGR, and HVQR. Asp-196 acts as the Proton acceptor in catalysis. An interdomain linker region spans residues 421–435; the sequence is MRTVEKDNLSEGHKF. Residues 436 to 814 are C-terminal regulatory PFK domain 2; sequence NVAVINVGAP…EEESADSHMF (379 aa). Beta-D-fructose 2,6-bisphosphate-binding positions include Lys-505, 563–567, Arg-601, 608–610, Glu-664, Arg-690, 696–699, and Arg-771; these read TISNN, MGG, and HVQQ.

This sequence belongs to the phosphofructokinase type A (PFKA) family. ATP-dependent PFK group I subfamily. Eukaryotic two domain clade 'E' sub-subfamily. In terms of assembly, homotetramer. The cofactor is Mg(2+).

It is found in the cytoplasm. The enzyme catalyses beta-D-fructose 6-phosphate + ATP = beta-D-fructose 1,6-bisphosphate + ADP + H(+). The protein operates within carbohydrate degradation; glycolysis; D-glyceraldehyde 3-phosphate and glycerone phosphate from D-glucose: step 3/4. Allosterically activated by ADP, AMP, or fructose 2,6-bisphosphate, and allosterically inhibited by ATP or citrate. Catalyzes the phosphorylation of D-fructose 6-phosphate to fructose 1,6-bisphosphate by ATP, the first committing step of glycolysis. The sequence is that of ATP-dependent 6-phosphofructokinase 1 from Caenorhabditis elegans.